We begin with the raw amino-acid sequence, 169 residues long: NAD(P)H-quinone oxidoreductase subunit J, chloroplastic (169 aa).

This sequence belongs to the complex I 30 kDa subunit family. In terms of assembly, NDH is composed of at least 16 different subunits, 5 of which are encoded in the nucleus.

Its subcellular location is the plastid. The protein localises to the chloroplast thylakoid membrane. The catalysed reaction is a plastoquinone + NADH + (n+1) H(+)(in) = a plastoquinol + NAD(+) + n H(+)(out). It carries out the reaction a plastoquinone + NADPH + (n+1) H(+)(in) = a plastoquinol + NADP(+) + n H(+)(out). NDH shuttles electrons from NAD(P)H:plastoquinone, via FMN and iron-sulfur (Fe-S) centers, to quinones in the photosynthetic chain and possibly in a chloroplast respiratory chain. The immediate electron acceptor for the enzyme in this species is believed to be plastoquinone. Couples the redox reaction to proton translocation, and thus conserves the redox energy in a proton gradient. This Physcomitrium patens (Spreading-leaved earth moss) protein is NAD(P)H-quinone oxidoreductase subunit J, chloroplastic.